Here is a 246-residue protein sequence, read N- to C-terminus: Phycocyanobilin:ferredoxin oxidoreductase (246 aa).

This sequence belongs to the HY2 family.

It catalyses the reaction (2R,3Z)-phycocyanobilin + 4 oxidized [2Fe-2S]-[ferredoxin] = biliverdin IXalpha + 4 reduced [2Fe-2S]-[ferredoxin] + 4 H(+). In terms of biological role, catalyzes the four-electron reduction of biliverdin IX-alpha (2-electron reduction at both the A and D rings); the reaction proceeds via an isolatable 2-electron intermediate, 181,182-dihydrobiliverdin. This chain is Phycocyanobilin:ferredoxin oxidoreductase, found in Crocosphaera subtropica (strain ATCC 51142 / BH68) (Cyanothece sp. (strain ATCC 51142)).